The primary structure comprises 623 residues: ATP-dependent zinc metalloprotease FtsH (623 aa).

Residues 1-7 (MNQSFWR) are Cytoplasmic-facing. The chain crosses the membrane as a helical span at residues 8-28 (PLFAILLFMLVFHLTNIFFAQ). Topologically, residues 29–117 (QGAQVAQISY…EVSALSTETP (89 aa)) are periplasmic. Residues 118–138 (LLLNALIYVAPWVILIAIWWV) traverse the membrane as a helical segment. Residues 139 to 623 (GMRSMRSQGP…SLNTAQAPPP (485 aa)) are Cytoplasmic-facing. ATP is bound at residue 214-221 (GPPGTGKT). His-435 contacts Zn(2+). The active site involves Glu-436. His-439 and Asp-511 together coordinate Zn(2+).

The protein in the central section; belongs to the AAA ATPase family. It in the C-terminal section; belongs to the peptidase M41 family. As to quaternary structure, homohexamer. Zn(2+) serves as cofactor.

The protein localises to the cell inner membrane. Acts as a processive, ATP-dependent zinc metallopeptidase for both cytoplasmic and membrane proteins. Plays a role in the quality control of integral membrane proteins. The protein is ATP-dependent zinc metalloprotease FtsH of Pelobacter propionicus (strain DSM 2379 / NBRC 103807 / OttBd1).